The sequence spans 487 residues: 7-deoxyloganetin glucosyltransferase (487 aa).

His25 functions as the Proton acceptor in the catalytic mechanism. His25 is a binding site for an anthocyanidin. Catalysis depends on Asp129, which acts as the Charge relay. Positions 151, 366, 381, 384, 385, 386, and 389 each coordinate UDP-alpha-D-glucose. Residue Ala404 participates in an anthocyanidin binding. 2 residues coordinate UDP-alpha-D-glucose: Glu405 and Gln406.

It belongs to the UDP-glycosyltransferase family. In terms of tissue distribution, expressed in roots.

It catalyses the reaction 7-deoxyloganetin + UDP-alpha-D-glucose = 7-deoxyloganin + UDP + H(+). Functionally, iridoid glucosyltransferase acting exclusively on 7-deoxyloganetin. No activity with 7-deoxyloganetic acid. In Catharanthus roseus (Madagascar periwinkle), this protein is 7-deoxyloganetin glucosyltransferase (UGT85A23).